A 278-amino-acid polypeptide reads, in one-letter code: TATA box-binding protein-associated factor RNA polymerase I subunit D (278 aa).

2 disordered regions span residues 19 to 71 (LANR…SSFE) and 88 to 115 (KKRY…RRNP). Phosphoserine is present on serine 23. 2 stretches are compositionally biased toward basic residues: residues 43–53 (REKRNPIRKFV) and 88–99 (KKRYKKKKKKRY). Phosphoserine occurs at positions 138 and 234.

In terms of assembly, component of the transcription factor SL1/TIF-IB complex, composed of TBP and at least TAF1A, TAF1B, TAF1C and TAF1D. Interacts with UBTF.

The protein localises to the nucleus. Component of the transcription factor SL1/TIF-IB complex, which is involved in the assembly of the PIC (preinitiation complex) during RNA polymerase I-dependent transcription. The rate of PIC formation probably is primarily dependent on the rate of association of SL1/TIF-IB with the rDNA promoter. SL1/TIF-IB is involved in stabilization of nucleolar transcription factor 1/UBTF on rDNA. Formation of SL1/TIF-IB excludes the association of TBP with TFIID subunits. This Pongo abelii (Sumatran orangutan) protein is TATA box-binding protein-associated factor RNA polymerase I subunit D (TAF1D).